The following is a 211-amino-acid chain: Putative F-box protein At1g52490 (211 aa).

In terms of domain architecture, F-box spans 12 to 59 (EEEYLQLPLDLIVEILKKLPLKSLVRFRCVSKQFSTIICSLRDFIESV).

This chain is Putative F-box protein At1g52490, found in Arabidopsis thaliana (Mouse-ear cress).